The following is a 195-amino-acid chain: Interferon tau-9 (195 aa).

A signal peptide spans methionine 1–glycine 23. 2 cysteine pairs are disulfide-bonded: cysteine 24-cysteine 122 and cysteine 52-cysteine 162.

It belongs to the alpha/beta interferon family. IFN-alphaII subfamily. As to expression, constitutively and exclusively expressed in the mononuclear cells of the extraembryonic trophectoderm.

The protein localises to the secreted. Functionally, paracrine hormone primarily responsible for maternal recognition of pregnancy. Interacts with endometrial receptors, probably type I interferon receptors, and blocks estrogen receptor expression, preventing the estrogen-induced increase in oxytocin receptor expression in the endometrium. This results in the suppression of the pulsatile endometrial release of the luteolytic hormone prostaglandin F2-alpha, hindering the regression of the corpus luteum (luteolysis) and therefore a return to ovarian cyclicity. This, and a possible direct effect of IFN-tau on prostaglandin synthesis, leads in turn to continued ovarian progesterone secretion, which stimulates the secretion by the endometrium of the nutrients required for the growth of the conceptus. In summary, displays particularly high antiviral and antiproliferative potency concurrently with particular weak cytotoxicity, high antiluteolytic activity and immunomodulatory properties. In contrast with other IFNs, IFN-tau is not virally inducible. The chain is Interferon tau-9 (IFNT9) from Ovis aries (Sheep).